We begin with the raw amino-acid sequence, 490 residues long: MRINPTTSGSEVSAVEKKNLGRIVKIIGPVLDVAFPPGKMPNIYNALVVQGRGNEQTNVTCEVQQLLGNNRVRAVAMSDTDGLMRGMEVIDTGAPISVPVGGSTLGRIFNVLGQPVDNLGPVDTNTTSPIHRSAPAFIQLDTKLSIFETGIKVVDLLAPYRRGGKIGLFGGAGVGKTVLIMELINNIAKAHGGVSVFGGVGERTREGNDLYLEMKESGVINEENIPESKVALVYGQMNEPPGARMRVGLTALTMAEYFRDVNEQDVLLFIDNIFRFVQAGSEVSALLGRMPSAVGYQPTLSTEMGSLQERITSTKEGSITSIQAVYVPADDLTDPAPATTFAHLDATTVLSRGLAAKGIYPAVDPLDSTSTMLQPRIVGEEHYETAQRVKQTLQRYKELQDIIAILGLDELSEEDRLTVARARKIERFLSQPFFVAEVFTGSPGKYVGLAETIRGFQLILSGELDGLPEQAFYLVGNIDEATAKAMNLKT.

170-177 (GGAGVGKT) lines the ATP pocket.

The protein belongs to the ATPase alpha/beta chains family. In terms of assembly, F-type ATPases have 2 components, CF(1) - the catalytic core - and CF(0) - the membrane proton channel. CF(1) has five subunits: alpha(3), beta(3), gamma(1), delta(1), epsilon(1). CF(0) has four main subunits: a(1), b(1), b'(1) and c(9-12).

It is found in the plastid. It localises to the chloroplast thylakoid membrane. It catalyses the reaction ATP + H2O + 4 H(+)(in) = ADP + phosphate + 5 H(+)(out). In terms of biological role, produces ATP from ADP in the presence of a proton gradient across the membrane. The catalytic sites are hosted primarily by the beta subunits. This Ipomoea setosa (Brazilian morning glory) protein is ATP synthase subunit beta, chloroplastic.